Reading from the N-terminus, the 156-residue chain is Small ribosomal subunit protein uS7 (156 aa).

Belongs to the universal ribosomal protein uS7 family. Part of the 30S ribosomal subunit. Contacts proteins S9 and S11.

Functionally, one of the primary rRNA binding proteins, it binds directly to 16S rRNA where it nucleates assembly of the head domain of the 30S subunit. Is located at the subunit interface close to the decoding center, probably blocks exit of the E-site tRNA. The protein is Small ribosomal subunit protein uS7 of Dictyoglomus thermophilum (strain ATCC 35947 / DSM 3960 / H-6-12).